A 402-amino-acid chain; its full sequence is Putative FBD-associated F-box protein At5g56690 (402 aa).

Residues methionine 1–aspartate 47 form the F-box domain. Residues serine 349–histidine 401 form the FBD domain.

The sequence is that of Putative FBD-associated F-box protein At5g56690 from Arabidopsis thaliana (Mouse-ear cress).